Reading from the N-terminus, the 838-residue chain is AP-4 complex subunit beta (838 aa).

Positions 582–673 (NSSKQTTSIN…NQNNNQNNNQ (92 aa)) are hinge. A disordered region spans residues 648–683 (ITDGNQNNNQNNNQNNNQNNNQNNNQNNQNNNNQNN). Residues 652-683 (NQNNNQNNNQNNNQNNNQNNNQNNQNNNNQNN) are compositionally biased toward low complexity. The ear stretch occupies residues 674 to 838 (NNQNNNNQNN…LSIPIPKIFN (165 aa)).

This sequence belongs to the adaptor complexes large subunit family. In terms of assembly, may be part of the adaptor protein complex 4 (AP-4), a heterotetramer composed of two large adaptins (epsilon-type subunitand beta-type subunit), a medium adaptin (mu-type subunit) and a small adaptin (sigma-type).

The protein localises to the golgi apparatus. It is found in the trans-Golgi network membrane. Probable component of an adaptor protein complex. Adaptor protein complexes are vesicle coat components involved both in vesicle formation and cargo selection. They control the vesicular transport of proteins in different trafficking pathways. This is AP-4 complex subunit beta (ap4b1) from Dictyostelium discoideum (Social amoeba).